Consider the following 94-residue polypeptide: Small ribosomal subunit protein bS20c (94 aa).

It belongs to the bacterial ribosomal protein bS20 family.

It localises to the plastid. It is found in the chloroplast. Binds directly to 16S ribosomal RNA. This is Small ribosomal subunit protein bS20c from Porphyra purpurea (Red seaweed).